The chain runs to 355 residues: uncharacterized protein (355 aa).

An N-terminal signal peptide occupies residues Met1 to Gly27. Cys28 carries the N-palmitoyl cysteine lipid modification. Cys28 carries S-diacylglycerol cysteine lipidation. The interval Gly33 to Leu53 is disordered. Residues Pro39–Lys48 are compositionally biased toward polar residues.

It is found in the cell membrane. This is an uncharacterized protein from Streptomyces coelicolor (strain ATCC BAA-471 / A3(2) / M145).